The primary structure comprises 292 residues: MTDELDDIHPILQGAPQTTEFRKLRKRIVRNVREALDQYGMVDGRDARWLVCLSGGKDSFTLLAALIELKWRGLLPVELLACNLDQGQPGFPATVLPEFLARMGIPHRIEYQDTYSIVVDKIPQGRTYCSLCSRLRRGNLYRIAREEGCSAIVLGHHRDDILETFFMNLFHGGRLATMPPKLVNEEGDLFVYRPLAFVAEADCERFARSMNYPIIPCDLCGSQDGLQRQQVKQILDGWEARSPGRRQVMFRALMNARPSHLLDPGLFDFAGLATGTASGRNGAEPPQLRGGD.

The short motif at 54–59 (SGGKDS) is the PP-loop motif element. The [4Fe-4S] cluster site is built by Cys-129, Cys-132, and Cys-220.

This sequence belongs to the TtcA family. As to quaternary structure, homodimer. Mg(2+) serves as cofactor. It depends on [4Fe-4S] cluster as a cofactor.

Its subcellular location is the cytoplasm. It catalyses the reaction cytidine(32) in tRNA + S-sulfanyl-L-cysteinyl-[cysteine desulfurase] + AH2 + ATP = 2-thiocytidine(32) in tRNA + L-cysteinyl-[cysteine desulfurase] + A + AMP + diphosphate + H(+). The protein operates within tRNA modification. In terms of biological role, catalyzes the ATP-dependent 2-thiolation of cytidine in position 32 of tRNA, to form 2-thiocytidine (s(2)C32). The sulfur atoms are provided by the cysteine/cysteine desulfurase (IscS) system. The sequence is that of tRNA-cytidine(32) 2-sulfurtransferase from Cereibacter sphaeroides (strain ATCC 17025 / ATH 2.4.3) (Rhodobacter sphaeroides).